We begin with the raw amino-acid sequence, 332 residues long: Phosphate acyltransferase (332 aa).

Belongs to the PlsX family. In terms of assembly, homodimer. Probably interacts with PlsY.

The protein localises to the cytoplasm. The enzyme catalyses a fatty acyl-[ACP] + phosphate = an acyl phosphate + holo-[ACP]. Its pathway is lipid metabolism; phospholipid metabolism. Its function is as follows. Catalyzes the reversible formation of acyl-phosphate (acyl-PO(4)) from acyl-[acyl-carrier-protein] (acyl-ACP). This enzyme utilizes acyl-ACP as fatty acyl donor, but not acyl-CoA. The sequence is that of Phosphate acyltransferase from Nitratiruptor sp. (strain SB155-2).